We begin with the raw amino-acid sequence, 765 residues long: Probable dehydratase PflD (765 aa).

The PFL domain occupies 3 to 637 (NRISRLKTAL…VVGATPDGRF (635 aa)). One can recognise a Glycine radical domain in the interval 645 to 765 (GGLSPMLGQD…DIIRRTAHQL (121 aa)). Residue Gly741 is modified to Glycine radical.

This sequence belongs to the glycyl radical enzyme (GRE) family.

Its function is as follows. Probably shows dehydratase activity. This chain is Probable dehydratase PflD (pflD), found in Escherichia coli (strain K12).